The primary structure comprises 465 residues: Lysosomal dipeptide transporter MFSD1 (465 aa).

Residues 1–23 (MEEEDEEARALLAGGPDEADRGA) form a disordered region. Residues 11-12 (LL) carry the Dileucine internalization motif motif. Helical transmembrane passes span 39–59 (LAHRLLVLLLMCFLGFGSYFC), 83–103 (LLYAWYSWPNVVLCFFGGFLI), 113–133 (TIIFSCFVCIGQVVFALGGIF), 135–155 (AFWLMEFGRFVFGIGGESLAV), 170–191 (LNLVFGLQLSMARIGSTVNMNL), 213–233 (ITLMIGGITCILSLICALALA), 266–286 (LWLIFIICVCYYVAVFPFIGL), 303–323 (SAINSVVYVISAPMSPVFGLL), 331–351 (IIWVLCAVAATLVSHMMLAFT), 361–381 (LLGLSYSLLACALWPMVAFVV), 392–412 (FMQSIQNLGLAIISIIAGMIL), and 418–438 (LFLEVFFIACVSLSLLSVVLL).

The protein belongs to the major facilitator superfamily. As to quaternary structure, homodimer. Interacts with lysosomal protein GLMP (via lumenal domain); the interaction starts while both proteins are still in the endoplasmic reticulum and is required for stabilization of MFSD1 in lysosomes but has no direct effect on its targeting to lysosomes or transporter activity.

It is found in the lysosome membrane. The catalysed reaction is L-alpha-aminoacyl-L-arginine(out) = L-alpha-aminoacyl-L-arginine(in). It catalyses the reaction L-arginyl-L-alpha-amino acid(out) = L-arginyl-L-alpha-amino acid(in). It carries out the reaction L-arginyl-glycine(out) = L-arginyl-glycine(in). The enzyme catalyses L-alpha-aminoacyl-L-lysine(out) = L-alpha-aminoacyl-L-lysine(in). The catalysed reaction is L-aspartyl-L-lysine(out) = L-aspartyl-L-lysine(in). It catalyses the reaction L-alanyl-L-lysine(out) = L-alanyl-L-lysine(in). It carries out the reaction L-lysyl-L-alpha-amino acid(out) = L-lysyl-L-alpha-amino acid(in). The enzyme catalyses L-lysyl-L-alanine(out) = L-lysyl-L-alanine(in). The catalysed reaction is L-lysyl-L-lysine(out) = L-lysyl-L-lysine(in). It catalyses the reaction L-lysyl-glycine(out) = L-lysyl-glycine(in). It carries out the reaction L-alpha-aminoacyl-L-histidine(out) = L-alpha-aminoacyl-L-histidine(in). The enzyme catalyses L-histidyl-L-alpha-amino acid(out) = L-histidyl-L-alpha-amino acid(in). The catalysed reaction is L-histidyl-glycine(out) = L-histidyl-glycine(in). Lysosomal dipeptide uniporter that selectively exports lysine, arginine or histidine-containing dipeptides with a net positive charge from the lysosome lumen into the cytosol. Could play a role in a specific type of protein O-glycosylation indirectly regulating macrophages migration and tissue invasion. Also essential for liver homeostasis. This Homo sapiens (Human) protein is Lysosomal dipeptide transporter MFSD1.